Here is a 187-residue protein sequence, read N- to C-terminus: Threonylcarbamoyl-AMP synthase (187 aa).

The YrdC-like domain maps to 4–187; it reads ILTLDNAVAT…DARSGQILRD (184 aa).

The protein belongs to the SUA5 family. TsaC subfamily.

The protein localises to the cytoplasm. The enzyme catalyses L-threonine + hydrogencarbonate + ATP = L-threonylcarbamoyladenylate + diphosphate + H2O. Required for the formation of a threonylcarbamoyl group on adenosine at position 37 (t(6)A37) in tRNAs that read codons beginning with adenine. Catalyzes the conversion of L-threonine, HCO(3)(-)/CO(2) and ATP to give threonylcarbamoyl-AMP (TC-AMP) as the acyladenylate intermediate, with the release of diphosphate. The chain is Threonylcarbamoyl-AMP synthase from Xanthomonas oryzae pv. oryzae (strain MAFF 311018).